An 863-amino-acid polypeptide reads, in one-letter code: Probable beta-glucosidase A (863 aa).

Residues 1–19 (MKLGWLEAAALTAASVASA) form the signal peptide. N-linked (GlcNAc...) asparagine glycosylation is found at Asn65, Asn214, and Asn255. Residue Asp283 is part of the active site. Asn318, Asn325, Asn357, Asn493, Asn526, Asn545, Asn567, Asn664, and Asn715 each carry an N-linked (GlcNAc...) asparagine glycan. A disordered region spans residues 720–754 (KESSGDPNYGWDDEDYIPEGAKDGSPQDVLPSGGG).

The protein belongs to the glycosyl hydrolase 3 family.

It localises to the secreted. It catalyses the reaction Hydrolysis of terminal, non-reducing beta-D-glucosyl residues with release of beta-D-glucose.. It participates in glycan metabolism; cellulose degradation. Its function is as follows. Beta-glucosidases are one of a number of cellulolytic enzymes involved in the degradation of cellulosic biomass. Catalyzes the last step releasing glucose from the inhibitory cellobiose. This is Probable beta-glucosidase A (bglA) from Emericella nidulans (strain FGSC A4 / ATCC 38163 / CBS 112.46 / NRRL 194 / M139) (Aspergillus nidulans).